We begin with the raw amino-acid sequence, 183 residues long: GTP cyclohydrolase 1 (183 aa).

The Zn(2+) site is built by Cys71, His74, and Cys142.

This sequence belongs to the GTP cyclohydrolase I family. In terms of assembly, homomer.

The enzyme catalyses GTP + H2O = 7,8-dihydroneopterin 3'-triphosphate + formate + H(+). It participates in cofactor biosynthesis; 7,8-dihydroneopterin triphosphate biosynthesis; 7,8-dihydroneopterin triphosphate from GTP: step 1/1. This Leptospira biflexa serovar Patoc (strain Patoc 1 / Ames) protein is GTP cyclohydrolase 1.